The sequence spans 688 residues: Glycine--tRNA ligase beta subunit (688 aa).

This sequence belongs to the class-II aminoacyl-tRNA synthetase family. Tetramer of two alpha and two beta subunits.

It localises to the cytoplasm. It catalyses the reaction tRNA(Gly) + glycine + ATP = glycyl-tRNA(Gly) + AMP + diphosphate. The polypeptide is Glycine--tRNA ligase beta subunit (Listeria welshimeri serovar 6b (strain ATCC 35897 / DSM 20650 / CCUG 15529 / CIP 8149 / NCTC 11857 / SLCC 5334 / V8)).